A 266-amino-acid polypeptide reads, in one-letter code: Gasdermin bGSDM (266 aa).

4 beta stranded membrane-spanning segments follow: residues 65–81, 93–113, 162–181, and 187–203; these read FSGQQLLQTDWSAGADL, EDKLKASLSGMKGLVLSFAYE, QFTVTIDCQREDQGKLEAAV, and AHASIERKQSNSFSLQT. A C-terminal region region spans residues 248–266; sequence GEEDFSVQPLQAPSGLLKL.

Belongs to the bacterial gasdermin family. As to quaternary structure, monomer. In terms of assembly, forms large, homooligomeric ring-shaped pores when inserted in membranes.

The protein localises to the cytoplasm. Its subcellular location is the cell membrane. With respect to regulation, the full-length protein before cleavage is inactive: intramolecular interactions between the N-terminal domain and the C-terminal region mediate autoinhibition. The pyroptosis-like-inducing activity is carried by the released N-terminal domain (Gasdermin bGSDM, N-terminus). Functionally, precursor of a pore-forming protein involved in defense against bacteriophages. Cleavage of this precursor by its dedicated protease releases the active moiety (gasdermin bGSDM, N-terminus) which inserts into membranes, forming pores and triggering cell death. Expression of bGSDM and the neighboring protease gene (Ga0307981_100051430) is highly toxic in E.coli. In terms of biological role, pore-forming protein that causes membrane permeabilization via a pyroptosis-like activity. This is the active form which makes ring-like pores with an interior pore diameter of 130-190 Angstroms, when integrated in liposomes. The protein is Gasdermin bGSDM of Unknown prokaryotic organism.